Consider the following 102-residue polypeptide: Protamine-2 (102 aa).

Disordered regions lie at residues 1–40 and 67–102; these read MVRY…SPEH and HRQQ…CRRH. Phosphoserine is present on residues Ser-8, Ser-10, and Ser-37.

It belongs to the protamine P2 family. In terms of assembly, interacts with TDRP. Post-translationally, proteolytic processing into mature chains is required for histone eviction during spermatogenesis. Transition proteins (TNP1 and TNP2) are required for processing. In terms of tissue distribution, testis.

It is found in the nucleus. Its subcellular location is the chromosome. In terms of biological role, protamines substitute for histones in the chromatin of sperm during the haploid phase of spermatogenesis. They compact sperm DNA into a highly condensed, stable and inactive complex. The protein is Protamine-2 (PRM2) of Pan troglodytes (Chimpanzee).